The primary structure comprises 149 residues: MAAAALRDQLTALLSSMFSQGLVDEQFQQLQMLQDEGGTPGFVSEVVTLFCDDADRIINEIATLLEQPVVNFDKVDAYVHQLKGSSASVGAQKVKFTCMQFRQFCQDKSRDGCLMALAVVRNDFYDLRNKFQTMLQLEQQIQAYDPKQQ.

Residues 39-144 (TPGFVSEVVT…LQLEQQIQAY (106 aa)) enclose the HPt domain. His80 carries the post-translational modification Phosphohistidine.

In terms of processing, two-component system major event consists of a His-to-Asp phosphorelay between a sensor histidine kinase (HK) and a response regulator (RR). In plants, the His-to-Asp phosphorelay involves an additional intermediate named Histidine-containing phosphotransfer protein (HPt). This multistep phosphorelay consists of a His-Asp-His-Asp sequential transfer of a phosphate group between first a His and an Asp of the HK protein, followed by the transfer to a conserved His of the HPt protein and finally the transfer to an Asp in the receiver domain of the RR protein. Widely expressed.

The protein resides in the cytoplasm. The protein localises to the cytosol. Its subcellular location is the nucleus. Functionally, functions as a two-component phosphorelay mediators between cytokinin sensor histidine kinases and response regulators (B-type ARRs). Plays an important role in propagating cytokinin signal transduction through the multistep His-to-Asp phosphorelay. Functions as a positive regulator of the cytokinin signaling pathway. May play a regulatory role in salt and drought tolerance during plant development. The chain is Histidine-containing phosphotransfer protein 2 from Oryza sativa subsp. japonica (Rice).